The sequence spans 269 residues: NAD kinase (269 aa).

The active-site Proton acceptor is Asp-62. NAD(+) is bound by residues 62–63 (DG), 130–131 (NE), Lys-141, Arg-158, Asp-160, 171–176 (TAYAMS), Ala-195, and Gln-229.

Belongs to the NAD kinase family. It depends on a divalent metal cation as a cofactor.

Its subcellular location is the cytoplasm. It catalyses the reaction NAD(+) + ATP = ADP + NADP(+) + H(+). Functionally, involved in the regulation of the intracellular balance of NAD and NADP, and is a key enzyme in the biosynthesis of NADP. Catalyzes specifically the phosphorylation on 2'-hydroxyl of the adenosine moiety of NAD to yield NADP. This Methanospirillum hungatei JF-1 (strain ATCC 27890 / DSM 864 / NBRC 100397 / JF-1) protein is NAD kinase.